A 152-amino-acid polypeptide reads, in one-letter code: Cornifin-A (152 aa).

A disordered region spans residues Glu20–Pro40. Repeat copies occupy residues Pro27 to Ala34, Pro35 to His42, Pro43 to Asn49, Pro50 to Gln57, Pro58 to Gln65, Pro66 to Gln73, Pro74 to Gln81, Pro82 to Gln89, Pro90 to Gln97, Pro98 to His105, Pro106 to His113, Pro114 to Gln121, Pro122 to Gln129, and Pro130 to Pro137. Residues Pro27 to Pro137 form a 14 X 8 AA approximate tandem repeats region.

This sequence belongs to the cornifin (SPRR) family. In terms of tissue distribution, in squamous epithelia lining the nasal vestibule and in the hard palate.

It localises to the cytoplasm. Functionally, cross-linked envelope protein of keratinocytes. It is a keratinocyte protein that first appears in the cell cytosol, but ultimately becomes cross-linked to membrane proteins by transglutaminase. All that results in the formation of an insoluble envelope beneath the plasma membrane. The chain is Cornifin-A (Sprr1a) from Rattus norvegicus (Rat).